Here is a 147-residue protein sequence, read N- to C-terminus: Nucleoside diphosphate kinase (147 aa).

ATP-binding residues include lysine 11, phenylalanine 59, arginine 87, threonine 93, arginine 104, and asparagine 114. Catalysis depends on histidine 117, which acts as the Pros-phosphohistidine intermediate.

This sequence belongs to the NDK family. Homotetramer. Mg(2+) is required as a cofactor.

The protein resides in the cytoplasm. It catalyses the reaction a 2'-deoxyribonucleoside 5'-diphosphate + ATP = a 2'-deoxyribonucleoside 5'-triphosphate + ADP. The catalysed reaction is a ribonucleoside 5'-diphosphate + ATP = a ribonucleoside 5'-triphosphate + ADP. Major role in the synthesis of nucleoside triphosphates other than ATP. The ATP gamma phosphate is transferred to the NDP beta phosphate via a ping-pong mechanism, using a phosphorylated active-site intermediate. The chain is Nucleoside diphosphate kinase from Anaeromyxobacter dehalogenans (strain 2CP-C).